The sequence spans 275 residues: Phosphate import ATP-binding protein PstB (275 aa).

Positions 28 to 270 (IDCRDIRVFY…PREKRTEDYI (243 aa)) constitute an ABC transporter domain. 60–67 (GPSGCGKS) serves as a coordination point for ATP.

Belongs to the ABC transporter superfamily. Phosphate importer (TC 3.A.1.7) family. As to quaternary structure, the complex is composed of two ATP-binding proteins (PstB), two transmembrane proteins (PstC and PstA) and a solute-binding protein (PstS).

The protein resides in the cell inner membrane. It carries out the reaction phosphate(out) + ATP + H2O = ADP + 2 phosphate(in) + H(+). In terms of biological role, part of the ABC transporter complex PstSACB involved in phosphate import. Responsible for energy coupling to the transport system. This is Phosphate import ATP-binding protein PstB from Hyphomonas neptunium (strain ATCC 15444).